We begin with the raw amino-acid sequence, 628 residues long: EF-hand calcium-binding domain-containing protein 7 (628 aa).

The span at 1–22 (MASNPGSDAALGTQNPLLSGSP) shows a compositional bias: polar residues. The interval 1 to 24 (MASNPGSDAALGTQNPLLSGSPRT) is disordered. EF-hand domains follow at residues 102–137 (TSKA…RGEK) and 138–173 (MTQE…TSEQ). The interval 192–231 (QFGSHMEGSPERGPSPAPKPSPRVIRKNDQETFSSKGDTS) is disordered. S200 and S212 each carry phosphoserine. A compositionally biased stretch (polar residues) spans 222–231 (ETFSSKGDTS). Positions 402 to 437 (EFRSTLSEIFEVIDLDGNGLISLEEYNFFELRTSGE) constitute an EF-hand 3 domain. Ca(2+)-binding residues include D415, D417, N419, and E426.

As to quaternary structure, component of the EvC complex composed of EFCAB7, IQCE, EVC2 and EVC; built from two subcomplexes, EVC2:EVC and EFCAB7:IQCE. Interacts (via EF-hand 1 and 2) with IQCE (via N-terminus); this interaction anchors the EVC-EVC2 complex in a signaling microdomain at the base of cilia and stimulates the Hedgehog (Hh) pathway. Interacts with EVC2 (via N-terminal end). Interacts with EVC.

The protein resides in the cell projection. Its subcellular location is the cilium membrane. Its function is as follows. Component of the EvC complex that positively regulates ciliary Hedgehog (Hh) signaling. Required for the localization of the EVC2:EVC subcomplex at the base of primary cilia. This Mus musculus (Mouse) protein is EF-hand calcium-binding domain-containing protein 7 (Efcab7).